We begin with the raw amino-acid sequence, 426 residues long: Enolase (426 aa).

Residue Q163 participates in (2R)-2-phosphoglycerate binding. E205 functions as the Proton donor in the catalytic mechanism. The Mg(2+) site is built by D242, E285, and D312. Positions 337, 366, 367, and 388 each coordinate (2R)-2-phosphoglycerate. K337 functions as the Proton acceptor in the catalytic mechanism.

Belongs to the enolase family. Mg(2+) is required as a cofactor.

It is found in the cytoplasm. It localises to the secreted. The protein resides in the cell surface. It catalyses the reaction (2R)-2-phosphoglycerate = phosphoenolpyruvate + H2O. The protein operates within carbohydrate degradation; glycolysis; pyruvate from D-glyceraldehyde 3-phosphate: step 4/5. Catalyzes the reversible conversion of 2-phosphoglycerate (2-PG) into phosphoenolpyruvate (PEP). It is essential for the degradation of carbohydrates via glycolysis. The protein is Enolase of Phenylobacterium zucineum (strain HLK1).